A 500-amino-acid polypeptide reads, in one-letter code: Cobyric acid synthase (500 aa).

One can recognise a GATase cobBQ-type domain in the interval 251–449 (KLNIVIPIMP…LHGVFDHPDA (199 aa)). Cysteine 332 serves as the catalytic Nucleophile. Histidine 441 is a catalytic residue.

The protein belongs to the CobB/CobQ family. CobQ subfamily.

It participates in cofactor biosynthesis; adenosylcobalamin biosynthesis. In terms of biological role, catalyzes amidations at positions B, D, E, and G on adenosylcobyrinic A,C-diamide. NH(2) groups are provided by glutamine, and one molecule of ATP is hydrogenolyzed for each amidation. This is Cobyric acid synthase from Marinomonas sp. (strain MWYL1).